Reading from the N-terminus, the 547-residue chain is Elongator complex protein 3 (547 aa).

In terms of domain architecture, Radical SAM core spans 82–372 (RTASGIAVVA…YRVQRDIPMP (291 aa)). Residues cysteine 99, cysteine 109, and cysteine 112 each contribute to the [4Fe-4S] cluster site. Phosphoserine is present on serine 161. Position 164 (lysine 164) interacts with acetyl-CoA. The residue at position 202 (tyrosine 202) is a Phosphotyrosine. Lysine 229 bears the N6-methyllysine mark. Tyrosine 251 is subject to Phosphotyrosine. Residues 396–547 (IQCRDVRTRE…QGPYMVKTLE (152 aa)) enclose the N-acetyltransferase domain. Residues 474-477 (ELHV), 497-499 (FGM), and tyrosine 530 each bind acetyl-CoA.

This sequence belongs to the ELP3 family. As to quaternary structure, component of the elongator complex which consists of ELP1, ELP2, ELP3, ELP4, ELP5 and ELP6. ELP1, ELP2 and ELP3 form the elongator core complex. Interacts with alpha-tubulin. It depends on [4Fe-4S] cluster as a cofactor. Post-translationally, tyrosine-phosphorylated; phosphorylation on Tyr-202 does not affect elongator complex integrity or ELP3 protein stability. Also serine/threonine-phosphorylated.

Its subcellular location is the cytoplasm. It is found in the nucleus. The enzyme catalyses uridine(34) in tRNA + acetyl-CoA + S-adenosyl-L-methionine + H2O = 5-(carboxymethyl)uridine(34) in tRNA + 5'-deoxyadenosine + L-methionine + CoA + 2 H(+). It participates in tRNA modification; 5-methoxycarbonylmethyl-2-thiouridine-tRNA biosynthesis. Functionally, catalytic tRNA acetyltransferase subunit of the elongator complex which is required for multiple tRNA modifications, including mcm5U (5-methoxycarbonylmethyl uridine), mcm5s2U (5-methoxycarbonylmethyl-2-thiouridine), and ncm5U (5-carbamoylmethyl uridine). In the elongator complex, acts as a tRNA uridine(34) acetyltransferase by mediating formation of carboxymethyluridine in the wobble base at position 34 in tRNAs. May also act as a protein lysine acetyltransferase by mediating acetylation of target proteins; such activity is however unclear in vivo and recent evidences suggest that ELP3 primarily acts as a tRNA acetyltransferase. Involved in neurogenesis: regulates the migration and branching of projection neurons in the developing cerebral cortex, through a process depending on alpha-tubulin acetylation. Required for acetylation of GJA1 in the developing cerebral cortex. The polypeptide is Elongator complex protein 3 (Bos taurus (Bovine)).